Here is a 336-residue protein sequence, read N- to C-terminus: MQEYIERVAAGEDLSLDAARDAVTTLFEDATDAEIGALLGALRAKGETEAEIAGFAQGMRDAAITVAPDCTPLVDTCGTGGDDYDTINVSTTAALVAAGAGIPTAKHGNYSVSSASGSSDVLDALGVELATDPAAVEARIETDGIGYMHAPAFHPGMEAVIGPRRDLGVRTIFNLLGPLTNPARADAQVVGVYDPALVPVLARALSRMAVDRALVVHGAGLDEFALHGDSTVAEVDGDTVTTTTVSPSTFGLAEAPIDAVAGGGPEANAADLRGIVTGELTGPKRDIVVANAGAAIYVGGGADSLAAGADRAAAAIDSGAAADTLAALTDAHAVQQ.

5-phospho-alpha-D-ribose 1-diphosphate contacts are provided by residues Gly78, 81–82 (GD), Thr86, 88–91 (NVST), 106–114 (KHGNYSVSS), and Ser118. Gly78 contributes to the anthranilate binding site. Residue Ser90 coordinates Mg(2+). Anthranilate is bound at residue Asn109. Position 164 (Arg164) interacts with anthranilate. Residues Asp222 and Glu223 each contribute to the Mg(2+) site.

The protein belongs to the anthranilate phosphoribosyltransferase family. In terms of assembly, homodimer. Mg(2+) serves as cofactor.

The enzyme catalyses N-(5-phospho-beta-D-ribosyl)anthranilate + diphosphate = 5-phospho-alpha-D-ribose 1-diphosphate + anthranilate. It functions in the pathway amino-acid biosynthesis; L-tryptophan biosynthesis; L-tryptophan from chorismate: step 2/5. In terms of biological role, catalyzes the transfer of the phosphoribosyl group of 5-phosphorylribose-1-pyrophosphate (PRPP) to anthranilate to yield N-(5'-phosphoribosyl)-anthranilate (PRA). This is Anthranilate phosphoribosyltransferase from Halobacterium salinarum (strain ATCC 29341 / DSM 671 / R1).